A 418-amino-acid chain; its full sequence is MIHSLFLMNGGGAVFLEKHWRSVVSRSVCAYLLEAQLKAGQPENVAPVLATPHHYLVSTHRHGISFVAVIQAEVPPLFVIEFLHRVAETLQDYFGECSEASIKDNVVIVYELLEEMLDNGFPLATESNILKELIKPPTILRSVVNSITGSSNVGDQLPTGQLSNIPWRRVGVKYTNNEAYFDVTEEIDAIIDKSGSTVFAEIQGVIDACIKLTGMPDLTLSFLNPRLLDDVSFHPCVRFKRWESERVLSFIPPVGNFRLMSYHVNSQNLVAIPVYVKHNINFRDDGSTGWFDITIGPKQTMGKVVENILVIIHMPKVVLNMTLTAAQGNFTFDPVTKVLIWDIGKIILPKLPTLKGLINLQSGEAKPEENPTLNIQFRIQQLAVSGLKVNRLDMYGERYKPFKGVKYVTKAGKFQVRT.

Residues 176 to 417 (NNEAYFDVTE…VTKAGKFQVR (242 aa)) enclose the MHD domain.

It belongs to the adaptor complexes medium subunit family. In terms of assembly, adaptor protein complex 1 (AP-1) is a heterotetramer composed of two large adaptins (gamma- and beta'-type subunits), a medium adaptin (mu-type subunit AP47) and a small adaptin (sigma-type subunit AP19). Regulated by phosphorylation.

The protein localises to the golgi apparatus. It localises to the cytoplasmic vesicle. The protein resides in the clathrin-coated vesicle membrane. Functionally, component of the adapter complexes which link clathrin to receptors in coated vesicles. Clathrin-associated protein complexes are believed to interact with the cytoplasmic tails of membrane proteins, leading to their selection and concentration. AP47 is a subunit of the plasma membrane adapter. This Diplobatis ommata (Ocellated electric ray) protein is AP-1 complex subunit mu.